We begin with the raw amino-acid sequence, 1714 residues long: Intersectin-1 (1714 aa).

The EH 1 domain maps to 21 to 109 (ERAKHDQQFL…PVMKQQPVAI (89 aa)). One can recognise an EF-hand 1 domain in the interval 53–88 (LPQPVLAQIWALADMNNDGRMDQVEFSIAMKLIKLK). Positions 66, 68, 70, 72, and 77 each coordinate Ca(2+). Ser-203 carries the post-translational modification Phosphoserine. The 90-residue stretch at 221–310 (SRLKYRQLFN…PEYIPPSFRR (90 aa)) folds into the EH 2 domain. The region spanning 254 to 289 (LPQAQLASIWNLSDIDQDGKLTAEEFILAMHLIDVA) is the EF-hand 2 domain. The Ca(2+) site is built by Asp-267, Asp-269, Asp-271, Lys-273, and Glu-278. Over residues 310-325 (RVRSGSGMSVISSSSV) the composition is skewed to low complexity. 2 disordered regions span residues 310-356 (RVRS…KREN) and 614-706 (SKQQ…QSRL). 3 positions are modified to phosphoserine: Ser-318, Ser-334, and Ser-335. Residues 326 to 702 (DQRLPEEPSS…ERAKPEMQDK (377 aa)) form a KLERQ region. Composition is skewed to basic and acidic residues over residues 340-356 (QPEK…KREN) and 622-706 (RSLE…QSRL). A coiled-coil region spans residues 354-658 (RENFERGSVE…QRRVQERDKQ (305 aa)). At Ser-685 the chain carries Phosphoserine. Positions 738–799 (VKVVYYRALY…PANYAEKIPE (62 aa)) constitute an SH3 1 domain. Positions 827–863 (APLPVTSSEPSTTPNNWADFSSTWPSSSNEKPETDNW) are disordered. Polar residues predominate over residues 831 to 855 (VTSSEPSTTPNNWADFSSTWPSSSN). At Thr-890 the chain carries Phosphothreonine. Phosphoserine occurs at positions 894, 895, and 897. Residues 906–964 (VEGLQAQALYPWRAKKDNHLNFNKSDVITVLEQQDMWWFGEVQGQKGWFPKSYVKLISG) form the SH3 2 domain. Ser-971 bears the Phosphoserine mark. A Phosphothreonine modification is found at Thr-977. A phosphoserine mark is found at Ser-979 and Ser-988. SH3 domains are found at residues 995–1053 (IPGE…LKDS) and 1067–1131 (KKPE…LLSP). Positions 1067 to 1131 (KKPEIAQVIA…PANYVKLLSP (65 aa)) are required for interaction with FCHSD2. The Bipartite nuclear localization signal; in isoform 2 motif lies at 1097–1120 (RKKNPGGWWEGELQARGKKRQIGW). Ser-1130 carries the post-translational modification Phosphoserine. Phosphothreonine is present on Thr-1137. In terms of domain architecture, SH3 5 spans 1148-1207 (PAVCQVIGMYDYTAQNDDELAFSKGQIINVLNKEDPDWWKGEVSGQVGLFPSNYVKLTTD). The 187-residue stretch at 1230 to 1416 (KRQGYIHELI…EELCSQVNEG (187 aa)) folds into the DH domain. In terms of domain architecture, PH spans 1455 to 1564 (KFLHSGKLYK…WVQKIKAASE (110 aa)). Residues 1572–1688 (KKREKAYLVR…KKDQGSKGPV (117 aa)) form the C2 domain. The residue at position 1638 (Ser-1638) is a Phosphoserine. Asp-1660, Ser-1663, and Asp-1666 together coordinate Ca(2+).

As to quaternary structure, interacts (via DH domain) with CDC42. Interacts (via SH3 domain 1) with WASL. Interacts with dynamin, SNAP25 and SNAP23. Interacts with clathrin-associated proteins and other components of the endocytic machinery, such as SPIN90, EPS15, EPN1, EPN2, STON2, FCHO1, FCHO2 and DAB2. Interacts (via SH3 domains) with REPS1 and SGIP1. Interacts with ARHGAP31. Interacts with ADAM15. Interacts with PRRT2. Interacts (via SH3 domain 4) with FCHSD2 (via SH3 domain 2). Interacts (via SH3 domain 1) with DENND2B. Interacts (via SH3 domains) with CBL. Isoform 2: Interacts with CBL and DNM1. Isoform 2: Interacts with LMNA. Isoform 2: Interacts with importin subunit KPNA1; this is likely to mediate its import into the nucleus. Interacts with DNM2. Ca(2+) serves as cofactor. In terms of tissue distribution, detected in brain, adrenal gland and heart. Detected in neurons at the calyx of Held (at protein level). Isoform 1: Primarily detected in brain neurons. Isoform 2: Primarily detected in glia (at protein level). Widely expressed. Expressed at high levels in brain, heart and skeletal muscle.

It localises to the endomembrane system. The protein resides in the synapse. It is found in the synaptosome. The protein localises to the cell projection. Its subcellular location is the lamellipodium. It localises to the cell membrane. The protein resides in the membrane. It is found in the clathrin-coated pit. The protein localises to the recycling endosome. Its subcellular location is the endosome. It localises to the cytoplasmic vesicle. The protein resides in the cytoplasm. It is found in the nucleus envelope. Functionally, adapter protein that provides a link between the endocytic membrane traffic and the actin assembly machinery. Acts as a guanine nucleotide exchange factor (GEF) for CDC42, and thereby stimulates actin nucleation mediated by WASL and the ARP2/3 complex. Plays a role in the assembly and maturation of clathrin-coated vesicles. Recruits FCHSD2 to clathrin-coated pits. Involved in endocytosis of activated EGFR, and probably also other growth factor receptors. Involved in endocytosis of integrin beta-1 (ITGB1) and transferrin receptor (TFR); internalization of ITGB1 as DAB2-dependent cargo but not TFR may involve association with DAB2. Promotes ubiquitination and subsequent degradation of EGFR, and thereby contributes to the down-regulation of EGFR-dependent signaling pathways. In chromaffin cells, required for normal exocytosis of catecholamines. Required for rapid replenishment of release-ready synaptic vesicles at presynaptic active zones. Inhibits ARHGAP31 activity toward RAC1. Its function is as follows. Plays a role in synaptic vesicle endocytosis in brain neurons. This Mus musculus (Mouse) protein is Intersectin-1.